A 429-amino-acid chain; its full sequence is MKISVLILAAGLGTRMKSQNPKVLQKICSKAMILHILKQAYKISDDVCVVLSHQKEKVEQVILEHFPNTRFLEQDLQNFPGTAGALRGYESKHEKVLILCGDMPLVKADDLEKIALNESDFNVAVFKAKDPKSYGRIVLKENKIQKIVETKDANKEELAINICNSGVYAIKAQILKEVLPLIKNDNKAKEYYLTDAVYLAKEKGYEIDAVFVNEQDFMGVNDKIELCLAQDLMQEAIKKEWMKQGVIFHMPATTFISDEVEFVGECEVYENVRIEGKSKIINSIIKSSSVIEDSIVENSDVGPLAHLRPKCQLKNTHIGNFVECKNALLNGVKAGHLSYLGDCEIDEGSNIGCGTITCNYDGVKKHKTKIGKNVFVGSDTQFIAPVNIEDEVIIAAGSCVNKDVKKGSLFINRAKEEIIKDYFYTKFKK.

The interval 1–223 is pyrophosphorylase; sequence MKISVLILAA…EQDFMGVNDK (223 aa). UDP-N-acetyl-alpha-D-glucosamine is bound by residues 8-11, Lys22, Gln74, and 81-82; these read LAAG and GT. Asp102 serves as a coordination point for Mg(2+). The UDP-N-acetyl-alpha-D-glucosamine site is built by Gly135, Glu149, Asn164, and Asn221. Asn221 is a binding site for Mg(2+). Positions 224–244 are linker; the sequence is IELCLAQDLMQEAIKKEWMKQ. Positions 245 to 429 are N-acetyltransferase; it reads GVIFHMPATT…KDYFYTKFKK (185 aa). Residues Arg308 and Lys325 each contribute to the UDP-N-acetyl-alpha-D-glucosamine site. His336 (proton acceptor) is an active-site residue. Tyr339 and Asn350 together coordinate UDP-N-acetyl-alpha-D-glucosamine. Acetyl-CoA is bound by residues 359–360, Ser378, Ala396, and Arg413; that span reads NY.

It in the N-terminal section; belongs to the N-acetylglucosamine-1-phosphate uridyltransferase family. This sequence in the C-terminal section; belongs to the transferase hexapeptide repeat family. Homotrimer. Requires Mg(2+) as cofactor.

It localises to the cytoplasm. The catalysed reaction is alpha-D-glucosamine 1-phosphate + acetyl-CoA = N-acetyl-alpha-D-glucosamine 1-phosphate + CoA + H(+). The enzyme catalyses N-acetyl-alpha-D-glucosamine 1-phosphate + UTP + H(+) = UDP-N-acetyl-alpha-D-glucosamine + diphosphate. Its pathway is nucleotide-sugar biosynthesis; UDP-N-acetyl-alpha-D-glucosamine biosynthesis; N-acetyl-alpha-D-glucosamine 1-phosphate from alpha-D-glucosamine 6-phosphate (route II): step 2/2. It functions in the pathway nucleotide-sugar biosynthesis; UDP-N-acetyl-alpha-D-glucosamine biosynthesis; UDP-N-acetyl-alpha-D-glucosamine from N-acetyl-alpha-D-glucosamine 1-phosphate: step 1/1. The protein operates within bacterial outer membrane biogenesis; LPS lipid A biosynthesis. Catalyzes the last two sequential reactions in the de novo biosynthetic pathway for UDP-N-acetylglucosamine (UDP-GlcNAc). The C-terminal domain catalyzes the transfer of acetyl group from acetyl coenzyme A to glucosamine-1-phosphate (GlcN-1-P) to produce N-acetylglucosamine-1-phosphate (GlcNAc-1-P), which is converted into UDP-GlcNAc by the transfer of uridine 5-monophosphate (from uridine 5-triphosphate), a reaction catalyzed by the N-terminal domain. This Campylobacter lari (strain RM2100 / D67 / ATCC BAA-1060) protein is Bifunctional protein GlmU.